The chain runs to 364 residues: D-alanine--D-alanine ligase A (364 aa).

One can recognise an ATP-grasp domain in the interval 145-348 (KRLLRDAGLN…YTDLISRLIE (204 aa)). 175–230 (ESRLGLPLFVKPANQGSSVGVSKVANEAQYQQAVALAFEFDHKVVVEQGIKGREIE) lines the ATP pocket. Mg(2+)-binding residues include aspartate 302, glutamate 315, and asparagine 317.

The protein belongs to the D-alanine--D-alanine ligase family. It depends on Mg(2+) as a cofactor. Requires Mn(2+) as cofactor.

The protein localises to the cytoplasm. It catalyses the reaction 2 D-alanine + ATP = D-alanyl-D-alanine + ADP + phosphate + H(+). It functions in the pathway cell wall biogenesis; peptidoglycan biosynthesis. Functionally, cell wall formation. The sequence is that of D-alanine--D-alanine ligase A (ddlA) from Salmonella typhi.